A 143-amino-acid chain; its full sequence is Photosystem II extrinsic protein U (143 aa).

The N-terminal stretch at 1–29 (MKRLVGVLMILGLMLTSWGLLGSPQTAIA) is a signal peptide. A propeptide spanning residues 30 to 44 (ASLSPLSFNPSPVLA) is cleaved from the precursor.

It belongs to the PsbU family. In terms of assembly, PSII is composed of 1 copy each of membrane proteins PsbA, PsbB, PsbC, PsbD, PsbE, PsbF, PsbH, PsbI, PsbJ, PsbK, PsbL, PsbM, PsbT, PsbX, PsbY, PsbZ, Psb30/Ycf12, peripheral proteins PsbO, CyanoQ (PsbQ), PsbU, PsbV and a large number of cofactors. It forms dimeric complexes.

The protein resides in the cellular thylakoid membrane. One of the extrinsic, lumenal subunits of photosystem II (PSII). PSII is a light-driven water plastoquinone oxidoreductase, using light energy to abstract electrons from H(2)O, generating a proton gradient subsequently used for ATP formation. The extrinsic proteins stabilize the structure of photosystem II oxygen-evolving complex (OEC), the ion environment of oxygen evolution and protect the OEC against heat-induced inactivation. The chain is Photosystem II extrinsic protein U from Leptolyngbya laminosa (Phormidium laminosum).